We begin with the raw amino-acid sequence, 585 residues long: RNA polymerase sigma factor RpoD (585 aa).

A disordered region spans residues Pro-67 to Ser-93. A sigma-70 factor domain-2 region spans residues Leu-351–Thr-421. The Interaction with polymerase core subunit RpoC motif lies at Asp-375–Gln-378. Residues Glu-430–Ala-506 form a sigma-70 factor domain-3 region. Residues Val-519–His-572 form a sigma-70 factor domain-4 region. Residues Leu-545–Ala-564 constitute a DNA-binding region (H-T-H motif).

This sequence belongs to the sigma-70 factor family. RpoD/SigA subfamily. Interacts transiently with the RNA polymerase catalytic core.

The protein resides in the cytoplasm. Functionally, sigma factors are initiation factors that promote the attachment of RNA polymerase to specific initiation sites and are then released. This sigma factor is the primary sigma factor during exponential growth. The chain is RNA polymerase sigma factor RpoD from Leptospira interrogans serogroup Icterohaemorrhagiae serovar copenhageni (strain Fiocruz L1-130).